The chain runs to 463 residues: Chromosomal replication initiator protein DnaA (463 aa).

The segment at 1-90 is domain I, interacts with DnaA modulators; sequence MSLSLWQQCL…KPLSQIISQT (90 aa). Positions 91-126 are domain II; sequence VTASVSAPSAPIVRVAAPSRPSWDNAAPQPELSYRS. Positions 127–343 are domain III, AAA+ region; the sequence is NVNPKHTFDN…GALNRVIANA (217 aa). ATP is bound by residues glycine 171, glycine 173, lysine 174, and threonine 175. A domain IV, binds dsDNA region spans residues 344–463; it reads NFTGRAITID…FSNLIRTLSS (120 aa).

It belongs to the DnaA family. As to quaternary structure, oligomerizes as a right-handed, spiral filament on DNA at oriC.

The protein localises to the cytoplasm. In terms of biological role, plays an essential role in the initiation and regulation of chromosomal replication. ATP-DnaA binds to the origin of replication (oriC) to initiate formation of the DNA replication initiation complex once per cell cycle. Binds the DnaA box (a 9 base pair repeat at the origin) and separates the double-stranded (ds)DNA. Forms a right-handed helical filament on oriC DNA; dsDNA binds to the exterior of the filament while single-stranded (ss)DNA is stabiized in the filament's interior. The ATP-DnaA-oriC complex binds and stabilizes one strand of the AT-rich DNA unwinding element (DUE), permitting loading of DNA polymerase. After initiation quickly degrades to an ADP-DnaA complex that is not apt for DNA replication. Binds acidic phospholipids. The sequence is that of Chromosomal replication initiator protein DnaA from Serratia proteamaculans (strain 568).